A 481-amino-acid chain; its full sequence is 2-succinylbenzoate--CoA ligase (481 aa).

Belongs to the ATP-dependent AMP-binding enzyme family. MenE subfamily.

It carries out the reaction 2-succinylbenzoate + ATP + CoA = 2-succinylbenzoyl-CoA + AMP + diphosphate. It functions in the pathway quinol/quinone metabolism; 1,4-dihydroxy-2-naphthoate biosynthesis; 1,4-dihydroxy-2-naphthoate from chorismate: step 5/7. It participates in quinol/quinone metabolism; menaquinone biosynthesis. In terms of biological role, converts 2-succinylbenzoate (OSB) to 2-succinylbenzoyl-CoA (OSB-CoA). This chain is 2-succinylbenzoate--CoA ligase, found in Bacillus cytotoxicus (strain DSM 22905 / CIP 110041 / 391-98 / NVH 391-98).